We begin with the raw amino-acid sequence, 432 residues long: Thiol-specific monooxygenase (432 aa).

FAD is bound by residues 13-17 (GGGPG) and 46-47 (VW). NADP(+) is bound at residue 65-66 (TN). 117–118 (EV) provides a ligand contact to FAD. Residue 199–202 (SGQD) coordinates NADP(+).

It belongs to the FMO family. As to quaternary structure, monomer. FAD is required as a cofactor.

Functionally, flavin-dependent oxidation of thiol-containing compounds. Probably required for the correct folding of disulfide-bonded proteins. This is Thiol-specific monooxygenase (FMO1) from Saccharomyces cerevisiae (strain ATCC 204508 / S288c) (Baker's yeast).